A 485-amino-acid polypeptide reads, in one-letter code: MSNKNFPLIFERSKEGRTSYSLPELDVESFDLEAELGSEYVRQTPPELPEVSELDIIRHYTGLSNRNYGVDSGFYPLGSCTMKYNPKINEDIARLDGFSHIHPYQDVSTVQGAMAMMFDLQESLKEITGMHEVSLQSAAGAQGEWTALMMIRAFHESRGDYGRTKVIVPDSAHGTNPASAAVAGFEAVTVKSNQEGLVDLDDLRQVVGEDTAALMLTNPNTLGLFEKDILTMAEIVHEAGGKLYYDGANLNAIMGYVRPGDMGFDAVHLNLHKTFTGPHGGGGPGSGPVGVSEELAAFLPKPLIVKKNDGYDFDENRPQSIGRVKPFYGNFGINLRAYTYIRTMGAEGLKKVSEYAVLNANYMMRQLEDVFELPYPQHCKHEFVLSGSKQKKLGVRTLDMAKRLLDFGYHPPTIYFPLNVEEGLMVEPTETESKETLDGFIDTMRTIAKEVEENPEIVQEAPHQTIVKRMDETRAARKPVLRYHP.

An N6-(pyridoxal phosphate)lysine modification is found at K273.

The protein belongs to the GcvP family. C-terminal subunit subfamily. The glycine cleavage system is composed of four proteins: P, T, L and H. In this organism, the P 'protein' is a heterodimer of two subunits. The cofactor is pyridoxal 5'-phosphate.

The catalysed reaction is N(6)-[(R)-lipoyl]-L-lysyl-[glycine-cleavage complex H protein] + glycine + H(+) = N(6)-[(R)-S(8)-aminomethyldihydrolipoyl]-L-lysyl-[glycine-cleavage complex H protein] + CO2. The glycine cleavage system catalyzes the degradation of glycine. The P protein binds the alpha-amino group of glycine through its pyridoxal phosphate cofactor; CO(2) is released and the remaining methylamine moiety is then transferred to the lipoamide cofactor of the H protein. The protein is Probable glycine dehydrogenase (decarboxylating) subunit 2 of Oceanobacillus iheyensis (strain DSM 14371 / CIP 107618 / JCM 11309 / KCTC 3954 / HTE831).